A 220-amino-acid polypeptide reads, in one-letter code: Deoxyribose-phosphate aldolase (220 aa).

Residue Asp-89 is the Proton donor/acceptor of the active site. Residue Lys-151 is the Schiff-base intermediate with acetaldehyde of the active site. Catalysis depends on Lys-180, which acts as the Proton donor/acceptor.

This sequence belongs to the DeoC/FbaB aldolase family. DeoC type 1 subfamily.

The protein localises to the cytoplasm. The catalysed reaction is 2-deoxy-D-ribose 5-phosphate = D-glyceraldehyde 3-phosphate + acetaldehyde. The protein operates within carbohydrate degradation; 2-deoxy-D-ribose 1-phosphate degradation; D-glyceraldehyde 3-phosphate and acetaldehyde from 2-deoxy-alpha-D-ribose 1-phosphate: step 2/2. Its function is as follows. Catalyzes a reversible aldol reaction between acetaldehyde and D-glyceraldehyde 3-phosphate to generate 2-deoxy-D-ribose 5-phosphate. This is Deoxyribose-phosphate aldolase from Staphylococcus saprophyticus subsp. saprophyticus (strain ATCC 15305 / DSM 20229 / NCIMB 8711 / NCTC 7292 / S-41).